Here is a 285-residue protein sequence, read N- to C-terminus: MLLATFKLCAGSSYRHVRSMKGLRQQAVLAIGQELNRRALGGPAPAAWIYQVRRRGSLLGSQLEDSLYSDQELAYIQQGEEAMQRALGILKDQEGWKKESRQVNGDEVLSKVIPDVGKVFRLEVVVDQPMERLYEELVERMEAMGEWNPSVKEIKVLQKIGKDTIITHELAAEAAGNLVGPRDFVSVRCTKRRGSMCVLAGTATLYEEMPQQKGVIRAEHGPTCMVLRPLAGSPSRTKLTWLLSIDLKGWLPKTIINQVLSQTQVDFANHLRKRLESCPALEARC.

A mitochondrion-targeting transit peptide spans 1–63; it reads MLLATFKLCA…RRGSLLGSQL (63 aa). A phosphoserine; by PKA mark is found at Ser-57 and Ser-195. An START domain is found at 67–280; that stretch reads LYSDQELAYI…LRKRLESCPA (214 aa).

May interact with TSPO.

It localises to the mitochondrion. The catalysed reaction is cholesterol(in) = cholesterol(out). It participates in steroid metabolism; cholesterol metabolism. Functionally, plays a key role in steroid hormone synthesis by enhancing the metabolism of cholesterol into pregnenolone. Mediates the transfer of cholesterol from the outer mitochondrial membrane to the inner mitochondrial membrane where it is cleaved to pregnenolone. This is Steroidogenic acute regulatory protein, mitochondrial (STAR) from Ovis aries (Sheep).